The primary structure comprises 262 residues: MQTIIRVEKLAKTFNQHQALHAVDLNIHHGEMVALLGPSGSGKSTLLRHLSGLITGDKSAGSHIELLGRTVQREGRLARDIRKSRANTGYIFQQFNLVNRLSVLENVLIGALGSTPFWRTCFSWFTREQKQRALQALTRVGMVHFAHQRVSTLSGGQQQRVAIARALMQQAKVILADEPIASLDPESARIVMDTLRDINQNDGITVVVTLHQVDYALRYCERIVALRQGHVFYDGSSQQFDNERFDHLYRSINRVEENAKAA.

An ABC transporter domain is found at 5–253 (IRVEKLAKTF…RFDHLYRSIN (249 aa)). 37 to 44 (GPSGSGKS) contacts ATP.

It belongs to the ABC transporter superfamily. Phosphonates importer (TC 3.A.1.9.1) family. In terms of assembly, the complex is composed of two ATP-binding proteins (PhnC), two transmembrane proteins (PhnE) and a solute-binding protein (PhnD).

The protein resides in the cell inner membrane. The catalysed reaction is phosphonate(out) + ATP + H2O = phosphonate(in) + ADP + phosphate + H(+). In terms of biological role, part of the ABC transporter complex PhnCDE involved in phosphonates import. Responsible for energy coupling to the transport system. This is Phosphonates import ATP-binding protein PhnC from Escherichia coli O6:K15:H31 (strain 536 / UPEC).